Consider the following 185-residue polypeptide: Ribosome-recycling factor (185 aa).

The protein belongs to the RRF family.

It localises to the cytoplasm. Responsible for the release of ribosomes from messenger RNA at the termination of protein biosynthesis. May increase the efficiency of translation by recycling ribosomes from one round of translation to another. This Hamiltonella defensa subsp. Acyrthosiphon pisum (strain 5AT) protein is Ribosome-recycling factor.